We begin with the raw amino-acid sequence, 387 residues long: Probable purine permease 6 (387 aa).

The disordered stretch occupies residues 1–24; the sequence is MMELESETQELHLHVNGEPEGKFS. Basic and acidic residues predominate over residues 9 to 24; the sequence is QELHLHVNGEPEGKFS. The next 10 helical transmembrane spans lie at 36–56, 68–88, 106–126, 129–149, 162–182, 201–221, 238–258, 283–303, 309–329, and 333–353; these read LRVSLYVTLLLAGETIATLLG, WLETLVQLVGFPLTLPCYYYL, FLTLSLVYIGLGLLVAGHCIL, FGLLYLPVSTFSLISASQLAF, ITPFILNSLVLLTISSTLLVI, YVIGYICAVGSSAGYSLVLSL, ILDMATYPSMVATCVVVVGLF, INIGSTISWQACLIGSVGLII, FSNVISTLCLPVVPVLAVVFF, and MSGIKLVAMFLAIWGFVSYGY. Residues 362–387 form a disordered region; the sequence is PEEDQELPQSKEEEEQKQVDTIHVQA. Residues 370–381 show a composition bias toward basic and acidic residues; it reads QSKEEEEQKQVD.

This sequence belongs to the purine permeases (TC 2.A.7.14) family.

The protein localises to the membrane. This Arabidopsis thaliana (Mouse-ear cress) protein is Probable purine permease 6 (PUP6).